We begin with the raw amino-acid sequence, 126 residues long: Aspartate 1-decarboxylase (126 aa).

The active-site Schiff-base intermediate with substrate; via pyruvic acid is S25. Residue S25 is modified to Pyruvic acid (Ser). T57 provides a ligand contact to substrate. Y58 (proton donor) is an active-site residue. Residue 73–75 (GAA) participates in substrate binding.

The protein belongs to the PanD family. Heterooctamer of four alpha and four beta subunits. Pyruvate is required as a cofactor. Post-translationally, is synthesized initially as an inactive proenzyme, which is activated by self-cleavage at a specific serine bond to produce a beta-subunit with a hydroxyl group at its C-terminus and an alpha-subunit with a pyruvoyl group at its N-terminus.

It localises to the cytoplasm. The enzyme catalyses L-aspartate + H(+) = beta-alanine + CO2. It participates in cofactor biosynthesis; (R)-pantothenate biosynthesis; beta-alanine from L-aspartate: step 1/1. Its function is as follows. Catalyzes the pyruvoyl-dependent decarboxylation of aspartate to produce beta-alanine. In Cronobacter sakazakii (strain ATCC BAA-894) (Enterobacter sakazakii), this protein is Aspartate 1-decarboxylase.